The primary structure comprises 247 residues: Probable enoyl-CoA hydratase echA6 (247 aa).

It belongs to the enoyl-CoA hydratase/isomerase family.

It carries out the reaction a (3S)-3-hydroxyacyl-CoA = a (2E)-enoyl-CoA + H2O. It catalyses the reaction a 4-saturated-(3S)-3-hydroxyacyl-CoA = a (3E)-enoyl-CoA + H2O. Could possibly oxidize fatty acids using specific components. This is Probable enoyl-CoA hydratase echA6 (echA6) from Mycobacterium leprae (strain TN).